The sequence spans 427 residues: Gamma-glutamyl phosphate reductase (427 aa).

It belongs to the gamma-glutamyl phosphate reductase family.

Its subcellular location is the cytoplasm. The enzyme catalyses L-glutamate 5-semialdehyde + phosphate + NADP(+) = L-glutamyl 5-phosphate + NADPH + H(+). The protein operates within amino-acid biosynthesis; L-proline biosynthesis; L-glutamate 5-semialdehyde from L-glutamate: step 2/2. Its function is as follows. Catalyzes the NADPH-dependent reduction of L-glutamate 5-phosphate into L-glutamate 5-semialdehyde and phosphate. The product spontaneously undergoes cyclization to form 1-pyrroline-5-carboxylate. The protein is Gamma-glutamyl phosphate reductase of Rhizobium meliloti (strain 1021) (Ensifer meliloti).